A 208-amino-acid chain; its full sequence is FMN-dependent NADH:quinone oxidoreductase 1 (208 aa).

It belongs to the azoreductase type 1 family. In terms of assembly, homodimer. Requires FMN as cofactor.

The catalysed reaction is 2 a quinone + NADH + H(+) = 2 a 1,4-benzosemiquinone + NAD(+). The enzyme catalyses N,N-dimethyl-1,4-phenylenediamine + anthranilate + 2 NAD(+) = 2-(4-dimethylaminophenyl)diazenylbenzoate + 2 NADH + 2 H(+). Its function is as follows. Quinone reductase that provides resistance to thiol-specific stress caused by electrophilic quinones. Also exhibits azoreductase activity. Catalyzes the reductive cleavage of the azo bond in aromatic azo compounds to the corresponding amines. The sequence is that of FMN-dependent NADH:quinone oxidoreductase 1 from Bacillus cereus (strain ATCC 14579 / DSM 31 / CCUG 7414 / JCM 2152 / NBRC 15305 / NCIMB 9373 / NCTC 2599 / NRRL B-3711).